The following is a 649-amino-acid chain: Epithelial sodium channel subunit gamma (649 aa).

The Cytoplasmic portion of the chain corresponds to 1–55 (MAPGEKIKAKIKKNLPVTGPQAPTIKELMRWYCLNTNTHGCRRIVVSRGRLRRLL). A helical transmembrane segment spans residues 56–76 (WIGFTLTAVALILWQCALLVF). The Extracellular portion of the chain corresponds to 77-541 (SFYTVSVSIK…GGQLGLWMSC (465 aa)). 8 cysteine pairs are disulfide-bonded: C100/C283, C207/C214, C260/C267, C372/C457, C394/C453, C398/C449, C407/C434, and C409/C423. The interval 135 to 221 (RKRREAESWN…SDCATYTFSS (87 aa)) is gating release of inhibition by proteolysis (GRIP); protease-sensitive region that is responsible for the proteolytic activation of the channel. N209 is a glycosylation site (N-linked (GlcNAc...) asparagine). N-linked (GlcNAc...) asparagine glycosylation is present at N497. The chain crosses the membrane as a helical span at residues 542 to 562 (SVVCVIEIIEVFFIDFFSIIA). At 563-649 (RRQWQKAKEW…LTDTQMLDEL (87 aa)) the chain is on the cytoplasmic side. The short motif at 623-627 (PPPKY) is the PY motif; recruits WW domain-containing proteins and is thereby required for ubiquitination and inhibition of the channel by NEDD4 and NEDD4L element.

The protein belongs to the amiloride-sensitive sodium channel (TC 1.A.6) family. SCNN1G subfamily. Component of the heterotrimeric epithelial sodium channel (ENaC) composed of an alpha/SCNN1A, a beta/SCNN1B and a gamma/SCNN1G subunit. An additional delta/SCNN1D subunit can replace the alpha/SCNN1A subunit to form an alternative channel with specific properties. Interacts with WWP1 (via WW domains). Interacts with WWP2 (via WW domains); inhibits the channel. Interacts with the full-length immature form of PCSK9 (pro-PCSK9); inhibits ENaC by promoting its proteasomal degradation. Interacts with BPIFA1; the interaction is indirect via SCNN1B and inhibits the proteolytic maturation of SCNN1A and SCNN1G and the activation of ENaC. Post-translationally, phosphorylated on serine and threonine residues. Aldosterone and insulin increase the basal level of phosphorylation. Ubiquitinated. Can be ubiquitinated at multiple sites and undergo monoubiquitination and polyubiquitination. Ubiquitination by NEDD4 or NEDD4L inhibits the ENaC channel through endocytosis, intracellular retention and degradation of its individual subunits. In terms of processing, ENaC is activated through the proteolytic maturation of its subunits. Furin cleaves the SCNN1G subunit first, followed by cleavage by prostasin (PRSS8), which results in a stepwise increase in the open probability of the channel due to the release of an inhibitory tract. BPIFA1, which is recruited by the SCNN1B subunit, prevents the proteolytic activation of ENaC. Post-translationally, N-glycosylated. N-linked glycans are processed to complex type during ENaC complex assembly and transport to the plasma membrane. Expressed in kidney (at protein level).

The protein localises to the apical cell membrane. The catalysed reaction is Na(+)(in) = Na(+)(out). Originally identified and characterized by its inhibition by the diuretic drug amiloride. This is one of the three pore-forming subunits of the heterotrimeric epithelial sodium channel (ENaC), a critical regulator of sodium balance and fluid homeostasis. ENaC operates in epithelial tissues, where it mediates the electrodiffusion of sodium ions from extracellular fluid through the apical membrane of cells, with water following osmotically. It plays a key role in maintaining sodium homeostasis through electrogenic sodium reabsorption in the kidneys. Additionally, ENaC is essential for airway surface liquid homeostasis, which is crucial for proper mucus clearance. The polypeptide is Epithelial sodium channel subunit gamma (Homo sapiens (Human)).